Here is a 185-residue protein sequence, read N- to C-terminus: Ribosome-recycling factor (185 aa).

It belongs to the RRF family.

It localises to the cytoplasm. Functionally, responsible for the release of ribosomes from messenger RNA at the termination of protein biosynthesis. May increase the efficiency of translation by recycling ribosomes from one round of translation to another. The polypeptide is Ribosome-recycling factor (Histophilus somni (strain 2336) (Haemophilus somnus)).